The sequence spans 273 residues: Ribosomal RNA small subunit methyltransferase A (273 aa).

S-adenosyl-L-methionine contacts are provided by asparagine 19, leucine 21, glycine 46, glutamate 71, aspartate 94, and asparagine 117.

It belongs to the class I-like SAM-binding methyltransferase superfamily. rRNA adenine N(6)-methyltransferase family. RsmA subfamily.

It is found in the cytoplasm. The enzyme catalyses adenosine(1518)/adenosine(1519) in 16S rRNA + 4 S-adenosyl-L-methionine = N(6)-dimethyladenosine(1518)/N(6)-dimethyladenosine(1519) in 16S rRNA + 4 S-adenosyl-L-homocysteine + 4 H(+). Its function is as follows. Specifically dimethylates two adjacent adenosines (A1518 and A1519) in the loop of a conserved hairpin near the 3'-end of 16S rRNA in the 30S particle. May play a critical role in biogenesis of 30S subunits. This Burkholderia ambifaria (strain MC40-6) protein is Ribosomal RNA small subunit methyltransferase A.